Reading from the N-terminus, the 572-residue chain is Formate--tetrahydrofolate ligase (572 aa).

65-72 is a binding site for ATP; sequence TPLGEGKT.

Belongs to the formate--tetrahydrofolate ligase family.

It carries out the reaction (6S)-5,6,7,8-tetrahydrofolate + formate + ATP = (6R)-10-formyltetrahydrofolate + ADP + phosphate. The protein operates within one-carbon metabolism; tetrahydrofolate interconversion. The protein is Formate--tetrahydrofolate ligase of Chloroflexus aurantiacus (strain ATCC 29366 / DSM 635 / J-10-fl).